Consider the following 613-residue polypeptide: Zinc finger protein 665 (613 aa).

18 consecutive C2H2-type zinc fingers follow at residues tyrosine 113 to histidine 135, tyrosine 141 to histidine 163, tyrosine 169 to histidine 191, tyrosine 197 to histidine 219, tyrosine 225 to histidine 247, tyrosine 253 to histidine 275, tyrosine 281 to histidine 303, tyrosine 309 to histidine 331, phenylalanine 337 to histidine 359, tyrosine 365 to histidine 387, tyrosine 393 to histidine 415, tyrosine 421 to histidine 443, tyrosine 449 to histidine 471, tyrosine 477 to histidine 499, tyrosine 505 to histidine 527, tyrosine 533 to histidine 555, tyrosine 561 to histidine 583, and tyrosine 589 to histidine 611.

The protein belongs to the krueppel C2H2-type zinc-finger protein family.

The protein localises to the nucleus. May be involved in transcriptional regulation. The polypeptide is Zinc finger protein 665 (ZNF665) (Pongo abelii (Sumatran orangutan)).